A 461-amino-acid polypeptide reads, in one-letter code: MNREIYDFVAIGIGPFNLSLASLSAPLRGVRTLFLDKKSGFDWHPGMLIETSTLQNPFLADLVSLADPRSEYSYLNYCKLTNRIYSYYMRENHYLSRAEYTRYCQWVAARLPNLRFGCDVQGVLHDPESHSYLVTGQHTMSGQRFMFRCRKLVLGLGSQPYLPACCDRRAAPFIHSADYLRHKYELQGRASITIVGSGQSAAEVFHDLLRESGRHDYSLAWITRSPRFFQMENTKLTLELISPDYTEYFHDLPEARRQEILTQQNSLYKGINASLINQIYDLLDEKVHDGDNRYTLLTNSELRACRYDPLQERFQLDFQHLDCDRPFSHATDGLVLATGYSHEIPACINPIHDRIAWNADGSYRIGRNYAIDHEGSEIFVQNTGLLSHGVTNPDLGFCCYRNSQILRELTGTEHYRIETRTALQEFSPPADGVLKHRPARRAERGPTVAARPLMDIHRATL.

Position 9 to 15 (9 to 15 (VAIGIGP)) interacts with FAD.

It belongs to the lysine N(6)-hydroxylase/L-ornithine N(5)-oxygenase family. It depends on FAD as a cofactor.

The protein operates within siderophore biosynthesis; alcaligin biosynthesis. The chain is Alcaligin biosynthesis enzyme (alcA) from Bordetella bronchiseptica (strain ATCC BAA-588 / NCTC 13252 / RB50) (Alcaligenes bronchisepticus).